Reading from the N-terminus, the 357-residue chain is Probable cinnamyl alcohol dehydrogenase 7/8 (357 aa).

Cysteine 47 provides a ligand contact to Zn(2+). Serine 49 contributes to the NADP(+) binding site. Zn(2+) is bound by residues histidine 69, glutamate 70, cysteine 100, cysteine 103, cysteine 106, cysteine 114, and cysteine 163. Residues threonine 167, 188–193 (GLGGVG), 211–216 (SSSDKK), threonine 251, glycine 275, and 298–300 (SFI) contribute to the NADP(+) site.

The protein belongs to the zinc-containing alcohol dehydrogenase family. In terms of assembly, homodimer. Requires Zn(2+) as cofactor.

The enzyme catalyses (E)-cinnamyl alcohol + NADP(+) = (E)-cinnamaldehyde + NADPH + H(+). It carries out the reaction (E)-coniferol + NADP(+) = (E)-coniferaldehyde + NADPH + H(+). The catalysed reaction is (E)-sinapyl alcohol + NADP(+) = (E)-sinapaldehyde + NADPH + H(+). It catalyses the reaction (E)-4-coumaroyl alcohol + NADP(+) = (E)-4-coumaraldehyde + NADPH + H(+). The enzyme catalyses (E)-caffeyl alcohol + NADP(+) = (E)-caffeyl aldehyde + NADPH + H(+). The protein operates within aromatic compound metabolism; phenylpropanoid biosynthesis. Involved in lignin biosynthesis. Catalyzes the final step specific for the production of lignin monomers. Catalyzes the NADPH-dependent reduction of coniferaldehyde, 5-hydroxyconiferaldehyde, sinapaldehyde, 4-coumaraldehyde and caffeyl aldehyde to their respective alcohols. In Picea abies (Norway spruce), this protein is Probable cinnamyl alcohol dehydrogenase 7/8 (CAD7).